We begin with the raw amino-acid sequence, 230 residues long: Ribonuclease 3 (230 aa).

The 134-residue stretch at 1–134 (MKQLEELLST…FLGALLLDKG (134 aa)) folds into the RNase III domain. Mg(2+) is bound at residue glutamate 47. Aspartate 51 is an active-site residue. Positions 120 and 123 each coordinate Mg(2+). Residue glutamate 123 is part of the active site. A DRBM domain is found at 160–229 (DYKTCLQEFL…AKNALAQLSE (70 aa)).

This sequence belongs to the ribonuclease III family. Homodimer. Mg(2+) serves as cofactor.

The protein localises to the cytoplasm. The enzyme catalyses Endonucleolytic cleavage to 5'-phosphomonoester.. In terms of biological role, digests double-stranded RNA. Involved in the processing of primary rRNA transcript to yield the immediate precursors to the large and small rRNAs (23S and 16S). Processes some mRNAs, and tRNAs when they are encoded in the rRNA operon. Processes pre-crRNA and tracrRNA of type II CRISPR loci if present in the organism. The polypeptide is Ribonuclease 3 (Streptococcus pyogenes serotype M2 (strain MGAS10270)).